Reading from the N-terminus, the 1319-residue chain is ERAD-associated E3 ubiquitin-protein ligase DOA10 (1319 aa).

Met1 carries the N-acetylmethionine modification. The Cytoplasmic segment spans residues 1-131 (MDVDSDVNVS…LTFFEKARLA (131 aa)). The RING-CH-type zinc-finger motif lies at 31-100 (DDAPSGATCR…DICHYPIQFK (70 aa)). The Zn(2+) site is built by Cys39, Cys42, Cys56, Cys58, His66, Cys69, Cys90, and Cys93. The chain crosses the membrane as a helical span at residues 132 to 152 (LTIGLAAVLYIIGVPLVWNMF). Topologically, residues 153–203 (GKLYTMMLDGSSPYPGDFLKSLIYGYDQSATPELTTRAIFYQLLQNHSFTS) are lumenal. The chain crosses the membrane as a helical span at residues 204–224 (LQFIMIVILHIALYFQYDMIV). Topologically, residues 225-468 (REDVFSKMVF…GPLVINLKLK (244 aa)) are cytoplasmic. Over residues 291 to 306 (ADNNNNVINPRNDNVP) the composition is skewed to low complexity. Disordered regions lie at residues 291 to 315 (ADNNNNVINPRNDNVPPQDPNDHRN) and 329 to 381 (EATE…EADY). A helical membrane pass occupies residues 469–489 (LLNVIAYFIIAVVFTAIYLAI). The Lumenal portion of the chain corresponds to 490-491 (SY). Residues 492–512 (LFPTFIGFGLLKIYFGIFKVI) form a helical membrane-spanning segment. Residues 513-626 (LRGLCHLYYL…LFALKCTFKV (114 aa)) lie on the Cytoplasmic side of the membrane. A helical transmembrane segment spans residues 627–647 (FTLFFIELAGFPILAGVMLDF). Topologically, residues 648 to 660 (SLFCPILASNSRM) are lumenal. Residues 661-681 (LWVPSICAIWPPFSLFVYWTI) traverse the membrane as a helical segment. The Cytoplasmic segment spans residues 682–739 (GTLYMYWFAKYIGMIRKNIIRPGVLFFIRSPEDPNIKILHDSLIHPMSIQLSRLCLSM). The helical transmembrane segment at 740–760 (FIYAIFIVLGFGFHTRIFFPF) threads the bilayer. Residues 761–777 (MLKSNLLSVPEAYKPTS) lie on the Lumenal side of the membrane. Residues 778–797 (IISWKFNTILLTLYFTKRIL) form a helical membrane-spanning segment. Topologically, residues 798 to 965 (ESSSYVKPLL…YVPPDFRLRY (168 aa)) are cytoplasmic. The helical transmembrane segment at 966-986 (MTLLGLVWLFASILMLGVTFI) threads the bilayer. Topologically, residues 987–1019 (SQALINFVCSFGFLPVVKLLLGERNKVYVAWKE) are lumenal. The chain crosses the membrane as a helical span at residues 1020–1040 (LSDISYSYLNIYYVCVGSVCL). The Cytoplasmic segment spans residues 1041–1113 (SKIAKDILHF…IFDSMLVKYN (73 aa)). The helical transmembrane segment at 1114-1134 (LMVFIAIMIAVIRTMVSWVVL) threads the bilayer. At 1135-1168 (TDGILACYNYLTIRVFGNSSYTIGNSKWFKYDES) the chain is on the lumenal side. The chain crosses the membrane as a helical span at residues 1169 to 1189 (LLFVVWIISSMVNFGTGYKSL). Topologically, residues 1190–1213 (KLFFRNRNTSKLNFLKTMALELFK) are cytoplasmic. The chain crosses the membrane as a helical span at residues 1214–1234 (QGFLHMVIYVLPIIILSLVFL). The Lumenal portion of the chain corresponds to 1235–1270 (RDVSTKQIIDISHGSRSFTLSLNESFPTWTRMQDIY). The chain crosses the membrane as a helical span at residues 1271 to 1291 (FGLLIALESFTFFFQATVLFI). Residues 1292–1319 (QWFKSTVQNVKDEVYTKGRALENLPDES) lie on the Cytoplasmic side of the membrane.

The protein belongs to the DOA10/MARCH6 family. In terms of assembly, component of the DOA10 ubiquitin ligase complex which contains E3 ligase SSM4/DOA10 and CDC48-binding protein UBX2/SEL1. The DOA10 complex interacts with the heterotrimeric CDC48-NPL4-UFD1 ATPase complex which is recruited by UBX2/SEL1 via its interaction with CDC48. Interacts with its associated ubiquitin conjugating enzymes UBC6 and UBC7 with its membrane anchor CUE1. Interacts with PEX29.

Its subcellular location is the endoplasmic reticulum membrane. It is found in the nucleus inner membrane. The catalysed reaction is S-ubiquitinyl-[E2 ubiquitin-conjugating enzyme]-L-cysteine + [acceptor protein]-L-lysine = [E2 ubiquitin-conjugating enzyme]-L-cysteine + N(6)-ubiquitinyl-[acceptor protein]-L-lysine.. Its pathway is protein modification; protein ubiquitination. Functionally, E3 ubiquitin-protein ligase which accepts ubiquitin specifically from endoplasmic reticulum-associated UBC6 and UBC7 E2 ligases, and transfers it to substrates promoting their degradation. Mediates the degradation of a broad range of substrates, including endoplasmic reticulum membrane proteins (ERQC), soluble nuclear proteins and soluble cytoplasmic proteins (CytoQC). Component of the DOA10 ubiquitin ligase complex, which is part of the ERAD-C pathway responsible for the rapid degradation of membrane proteins with misfolded cytoplasmic domains. ERAD-C substrates are ubiquitinated through DOA10 in conjunction with the E2 ubiquitin-conjugating enzymes UBC6 and UBC7-CUE1. Ubiquitinated substrates are then removed to the cytosol via the action of the UFD1-NPL4-CDC48/p97 (UNC) AAA ATPase complex and targeted to the proteasome. Also recognizes the N-terminally acetylated residue of proteins as degradation signal (degron). N-terminally acetylated target proteins include MATALPHA2, TBF1, SLK19, YMR090W, HIS3, HSP104, UBP6 and ARO8. Catalyzes ubiquitination of mislocalized tail-anchored proteins that are extracted from the mitochondrion membrane by MSP1: following extraction, mistargeted proteins are transferred to the endoplasmic reticulum, where they are ubiquitinated by DOA10 and degraded by the proteasome. The sequence is that of ERAD-associated E3 ubiquitin-protein ligase DOA10 (SSM4) from Saccharomyces cerevisiae (strain ATCC 204508 / S288c) (Baker's yeast).